A 379-amino-acid polypeptide reads, in one-letter code: Probable malonyl-CoA-acyl carrier protein transacylase, mitochondrial (379 aa).

Residues 1-23 (MLAARRLLRSPRITGALSWSRWS) constitute a mitochondrion transit peptide. Catalysis depends on residues Ser158 and His275.

This sequence belongs to the type II malonyltransferase family.

It localises to the mitochondrion. The enzyme catalyses holo-[ACP] + malonyl-CoA = malonyl-[ACP] + CoA. It functions in the pathway lipid metabolism; fatty acid biosynthesis. Its function is as follows. Catalyzes the transfer of a malonyl moiety from malonyl-CoA to the free thiol group of the phosphopantetheine arm of the ACP protein. This suggests the existence of the biosynthesis of fatty acids in mitochondria. This Drosophila melanogaster (Fruit fly) protein is Probable malonyl-CoA-acyl carrier protein transacylase, mitochondrial.